A 330-amino-acid chain; its full sequence is Protein RfbI (330 aa).

Residues 3-89 enclose the 2Fe-2S ferredoxin-type domain; the sequence is HIIKIFPSNI…ELNAHFFPEL (87 aa). Cys-37, Cys-42, and Cys-45 together coordinate [2Fe-2S] cluster. Positions 94 to 192 constitute an FAD-binding FR-type domain; the sequence is KKIVPCKVNS…EGPCGTFFIR (99 aa).

[2Fe-2S] cluster is required as a cofactor.

It participates in bacterial outer membrane biogenesis; LPS O-antigen biosynthesis. This Salmonella typhimurium (strain LT2 / SGSC1412 / ATCC 700720) protein is Protein RfbI (rfbI).